The sequence spans 167 residues: MPRSQRNDNFIDKTFTVIADILLKILPTSNKEKQAFSYYRDGMSAQSEGEYAEALQNYYEALRLETDAYDRSYILYNIGLIHTSNGDHARALDYYYQALERNPSLPQALNNIAVIYHYRGEQALESSQTEISKLLFDKAADYWREAIRLAPTNYIEAQNWLKMTGRF.

3 TPR repeats span residues 35–68 (AFSYYRDGMSAQSEGEYAEALQNYYEALRLETDA), 72–105 (SYILYNIGLIHTSNGDHARALDYYYQALERNPSL), and 120–153 (GEQALESSQTEISKLLFDKAADYWREAIRLAPTN).

It belongs to the Ycf3 family.

Its subcellular location is the plastid. The protein localises to the chloroplast thylakoid membrane. In terms of biological role, essential for the assembly of the photosystem I (PSI) complex. May act as a chaperone-like factor to guide the assembly of the PSI subunits. In Chlorella vulgaris (Green alga), this protein is Photosystem I assembly protein Ycf3.